Consider the following 96-residue polypeptide: Bacterial microcompartment shell protein EutM (96 aa).

One can recognise a BMC domain in the interval Ala3–Pro87.

It belongs to the bacterial microcompartments protein family. Homohexamer with a central pore of up to 8.6 Angstroms diameter. The hexamers pack into a two-dimensional array. Interacts with EutQ; a probably cytoplasm-facing helix (Val-49 to Gln-64) interacts with N-terminus of EutQ.

It is found in the bacterial microcompartment. Its pathway is amine and polyamine degradation; ethanolamine degradation. Its function is as follows. Probably a major component of the bacterial microcompartment (BMC) shell dedicated to ethanolamine degradation. Each homohexamer has a central pore with an opening of up to 8.6 Angstroms. A positively-charged funnel leads to the pore from each side of the hexamer. The pore probably allows metabolite passage into and out of the BMC. Expression of eutK, eutL, eutM, eutN, eutS (eutSMNLK) in E.coli leads to formation of a single BMC. Expression alone leads to thick filaments that interfere with cell separation. Coexpression of eutQ with eutSMNLK permits E.coli to make cells with more than one mobile BMC, as is usual in vivo. May play a role in BMC shell biogenesis. Can replace homolog pduA in the pdu operon, cells grow better than wild-type on 1,2-propanediol and vitamin B12. Protein is incorporated into the pdu BMC microcompartment. Functionally, the ethanolamine (EA) catabolic bacterial microcompartment (BMC) probably concentrates low levels of ethanolamine catabolic enzymes, concentrates volatile reaction intermediates, keeps the level of toxic acetaldehyde low, generates enough acetyl-CoA to support cell growth, and maintains a pool of free coenzyme A (CoA) and NAD. Deletion of BMC genes (eutK, eutL, eutM) restores growth of eutD deletions, suggesting there are dedicated pools of coenzyme A (CoA) and NAD in the BMC. In terms of biological role, expression of the eut operon allows this bacteria to use ethanolamine as a carbon, nitrogen and energy source. It relies on cobalamin (vitamin B12) both as a cofactor for the ethanolamine ammonia-lyase (EAL) activity and to induce the operon. EA enhances bacterial survival in macrophages in a concentration-dependent manner, suggesting it is an important nutrient during infection. The chain is Bacterial microcompartment shell protein EutM from Salmonella typhimurium (strain LT2 / SGSC1412 / ATCC 700720).